The chain runs to 198 residues: Dephospho-CoA kinase (198 aa).

The region spanning 4–198 (RIGLTGGIAS…CGLRADGTTW (195 aa)) is the DPCK domain. 12–17 (ASGKSS) contacts ATP.

This sequence belongs to the CoaE family.

The protein localises to the cytoplasm. It carries out the reaction 3'-dephospho-CoA + ATP = ADP + CoA + H(+). The protein operates within cofactor biosynthesis; coenzyme A biosynthesis; CoA from (R)-pantothenate: step 5/5. Functionally, catalyzes the phosphorylation of the 3'-hydroxyl group of dephosphocoenzyme A to form coenzyme A. The sequence is that of Dephospho-CoA kinase from Parasynechococcus marenigrum (strain WH8102).